The primary structure comprises 70 residues: Large ribosomal subunit protein eL38 (70 aa).

This sequence belongs to the eukaryotic ribosomal protein eL38 family.

The chain is Large ribosomal subunit protein eL38 (RpL38) from Plutella xylostella (Diamondback moth).